The chain runs to 517 residues: Acetylcholine receptor subunit delta (517 aa).

The N-terminal stretch at 1 to 21 is a signal peptide; it reads MEGPVLTLGLLAALAVCGSWG. At 22-245 the chain is on the extracellular side; it reads LNEEERLIRH…ITFYLIIRRK (224 aa). N-linked (GlcNAc...) asparagine glycans are attached at residues Asn97 and Asn164. A disulfide bridge connects residues Cys151 and Cys165. Helical transmembrane passes span 246 to 270, 278 to 299, and 312 to 333; these read PLFYIINILVPCVLISFMVNLVFYL, TSVAISVLLAQSVFLLLISKRL, and FLLFGMVLVTMVVVICVIVLNI. Residues 334–471 are Cytoplasmic-facing; the sequence is HFRTPSTHVL…WNRVARTVDR (138 aa). Position 390 is a phosphotyrosine; by Tyr-kinases (Tyr390). A helical membrane pass occupies residues 472-490; the sequence is LCLFVVTPVMVVGTAWIFL.

It belongs to the ligand-gated ion channel (TC 1.A.9) family. Acetylcholine receptor (TC 1.A.9.1) subfamily. Delta/CHRND sub-subfamily. As to quaternary structure, pentamer of two alpha chains, and one each of the beta, delta, and gamma (in immature muscle) or epsilon (in mature muscle) chains. The muscle heteropentamer composed of alpha-1, beta-1, delta, epsilon subunits interacts with the alpha-conotoxin ImII.

Its subcellular location is the postsynaptic cell membrane. It localises to the cell membrane. The enzyme catalyses K(+)(in) = K(+)(out). The catalysed reaction is Na(+)(in) = Na(+)(out). In terms of biological role, after binding acetylcholine, the AChR responds by an extensive change in conformation that affects all subunits and leads to opening of an ion-conducting channel across the plasma membrane. The chain is Acetylcholine receptor subunit delta from Homo sapiens (Human).